A 367-amino-acid polypeptide reads, in one-letter code: Innexin inx2 (367 aa).

The Cytoplasmic portion of the chain corresponds to 1-22 (MFDVFGSVKGLLKIDQVCIDNN). Residues 23-43 (VFRMHYKATVIILIAFSLLVT) form a helical membrane-spanning segment. Residues 44-109 (SRQYIGDPID…EDEVKYHKYY (66 aa)) lie on the Extracellular side of the membrane. The helical transmembrane segment at 110-130 (QWVCFVLFFQAILFYVPRYLW) threads the bilayer. An interaction with shg region spans residues 130 to 179 (WKSWEGGRLKMLVMDLNSPIVNDECKNDRKKILVDYFIGNLNRHNFYAFR). Residues 131-179 (KSWEGGRLKMLVMDLNSPIVNDECKNDRKKILVDYFIGNLNRHNFYAFR) lie on the Cytoplasmic side of the membrane. The chain crosses the membrane as a helical span at residues 180 to 200 (FFVCEALNFVNVIGQIYFVDF). The Extracellular segment spans residues 201–266 (FLDGEFSTYG…VLPLNIVNEK (66 aa)). A helical transmembrane segment spans residues 267 to 287 (IYVFLWFWFIILSIMSGISLI). The Cytoplasmic portion of the chain corresponds to 288–367 (YRIAVVAGPK…HSAHKRPFDA (80 aa)).

This sequence belongs to the pannexin family. Monomer and heterooligomer with ogre or Inx3 (via cytoplasmic C-terminal region). Interacts (via cytoplasmic loop) with shg (via cytoplasmic region). Interacts with arm. As to expression, in ovary, expressed in inner germarial sheath cells, prefollicular cells, follicle cells, nurse cells and oocytes. Expressed in embryonic epithelial cells. Expressed in foregut and hindgut from stage 11-17, segmentally repeated tracheal placodes at stage 14, salivary gland at stage 16 and proventriculus at stage 16-17 (at protein level). During germband extension stage (stage 7), expressed in epidermal epithelial cells. Expressed in cephalic furrow. Repeating epidermal pattern emerges at stage 11, refines to one or two cells at each side of the segment borders by stage 13. Expressed in the imaginal wing disk. In pupae, expressed in the CNS and in primary, secondary and tertiary pigment cells of the retina. Expressed in optic lamina of the adult CNS.

It is found in the cell membrane. The protein localises to the cell junction. It localises to the gap junction. Its subcellular location is the cytoplasm. The protein resides in the apical cell membrane. It is found in the apicolateral cell membrane. The protein localises to the basolateral cell membrane. It localises to the lateral cell membrane. Functionally, structural components of the gap junctions. Involved in gap junctional communication between germline and somatic cells which is essential for normal oogenesis. In embryonic epidermis, required for epithelial morphogenesis. Required for keyhole formation during early stages of proventriculus development in response to wg signaling. In follicle cells, promotes the formation of egg chambers in part through regulation of shg and baz at the boundary between germ cells and follicle cells. In inner germarial sheath cells, required for survival of early germ cells and for cyst formation. The chain is Innexin inx2 (Inx2) from Drosophila melanogaster (Fruit fly).